A 225-amino-acid polypeptide reads, in one-letter code: Protein-L-isoaspartate O-methyltransferase (225 aa).

Ser-75 is an active-site residue.

The protein belongs to the methyltransferase superfamily. L-isoaspartyl/D-aspartyl protein methyltransferase family.

The protein localises to the cytoplasm. The enzyme catalyses [protein]-L-isoaspartate + S-adenosyl-L-methionine = [protein]-L-isoaspartate alpha-methyl ester + S-adenosyl-L-homocysteine. Its function is as follows. Catalyzes the methyl esterification of L-isoaspartyl residues in peptides and proteins that result from spontaneous decomposition of normal L-aspartyl and L-asparaginyl residues. It plays a role in the repair and/or degradation of damaged proteins. This Stenotrophomonas maltophilia (strain K279a) protein is Protein-L-isoaspartate O-methyltransferase.